The primary structure comprises 209 residues: Thymidylate kinase (209 aa).

13–20 is an ATP binding site; sequence GLEGAGKS.

The protein belongs to the thymidylate kinase family.

The enzyme catalyses dTMP + ATP = dTDP + ADP. Functionally, phosphorylation of dTMP to form dTDP in both de novo and salvage pathways of dTTP synthesis. The protein is Thymidylate kinase of Shewanella sp. (strain ANA-3).